We begin with the raw amino-acid sequence, 274 residues long: MSGYQHELPPNISKTSPAPEEAREELLQQCEAIWKQMEECQSKLTMSGPETLPETDVQLYLLMMQVKALTAEYEQWQKRTPEIISDNQDVLLAVGKEELEKIAQELEMVLSSVQAKNKKLKKDLEKEQNWLDGQQKIVDALTSRQDELKNQLTAFSEKRVYQDIAGKLYKVRAHKEELLSALGDFLEEHFPLPQEQENQSKKKKGQSGKKSVQLMTLHEILEILINKLMTTPHDPYLVLEPHHWPPYIEMLLRYGIALRHPEDPKRIRLEAFHQ.

The segment at 1 to 21 (MSGYQHELPPNISKTSPAPEE) is disordered. Residues 96-159 (KEELEKIAQE…NQLTAFSEKR (64 aa)) adopt a coiled-coil conformation.

The protein belongs to the CENP-K/MCM22 family.

The protein localises to the nucleus. It is found in the chromosome. The protein resides in the centromere. It localises to the kinetochore. Its function is as follows. Probable component of a centromeric complex involved in assembly of kinetochore proteins, mitotic progression and chromosome segregation. The protein is Centromere protein K (cenpk) of Xenopus laevis (African clawed frog).